Here is a 254-residue protein sequence, read N- to C-terminus: 3-oxo-5-alpha-steroid 4-dehydrogenase 2 (254 aa).

4 helical membrane-spanning segments follow: residues 8–28 (SPVLAGSATLAALGALALYFA), 72–92 (PRSLFGPPATVLLGLFCAHYF), 146–166 (FSLGVFLFILGMGINIHSDYI), and 206–226 (LATWSLPALAFAFFSLCFLGL).

Belongs to the steroid 5-alpha reductase family.

The protein localises to the microsome membrane. It is found in the endoplasmic reticulum membrane. It catalyses the reaction a 3-oxo-5alpha-steroid + NADP(+) = a 3-oxo-Delta(4)-steroid + NADPH + H(+). It carries out the reaction 17beta-hydroxy-5alpha-androstan-3-one + NADP(+) = testosterone + NADPH + H(+). The enzyme catalyses 5alpha-pregnane-3,20-dione + NADP(+) = progesterone + NADPH + H(+). Functionally, converts testosterone (T) into 5-alpha-dihydrotestosterone (DHT) and progesterone or corticosterone into their corresponding 5-alpha-3-oxosteroids. It plays a central role in sexual differentiation and androgen physiology. In Sus scrofa (Pig), this protein is 3-oxo-5-alpha-steroid 4-dehydrogenase 2 (SRD5A2).